The chain runs to 710 residues: Probable threonine--tRNA ligase 1, cytoplasmic (710 aa).

The tract at residues 1–35 (MSDSQENKPVETPTEVKPVAEKKPAAEKKEKKPAV) is disordered. Over residues 18 to 33 (PVAEKKPAAEKKEKKP) the composition is skewed to basic and acidic residues. A TGS domain is found at 72–137 (KEEPINVTLP…EADCNLQLCK (66 aa)).

This sequence belongs to the class-II aminoacyl-tRNA synthetase family.

The protein localises to the cytoplasm. It carries out the reaction tRNA(Thr) + L-threonine + ATP = L-threonyl-tRNA(Thr) + AMP + diphosphate + H(+). The polypeptide is Probable threonine--tRNA ligase 1, cytoplasmic (thrS1) (Dictyostelium discoideum (Social amoeba)).